A 547-amino-acid polypeptide reads, in one-letter code: Chaperonin GroEL (547 aa).

ATP is bound by residues 30–33 (TLGP), Lys51, 87–91 (DGTTT), Gly415, and Asp496.

Belongs to the chaperonin (HSP60) family. Forms a cylinder of 14 subunits composed of two heptameric rings stacked back-to-back. Interacts with the co-chaperonin GroES.

It is found in the cytoplasm. It catalyses the reaction ATP + H2O + a folded polypeptide = ADP + phosphate + an unfolded polypeptide.. Its function is as follows. Together with its co-chaperonin GroES, plays an essential role in assisting protein folding. The GroEL-GroES system forms a nano-cage that allows encapsulation of the non-native substrate proteins and provides a physical environment optimized to promote and accelerate protein folding. The polypeptide is Chaperonin GroEL (Pelodictyon phaeoclathratiforme (strain DSM 5477 / BU-1)).